The sequence spans 356 residues: DNA polymerase IV (356 aa).

Residues 7 to 187 (IIHVDMDAFY…LPVNRVPGVG (181 aa)) enclose the UmuC domain. Mg(2+) is bound by residues D11 and D105. The active site involves E106.

It belongs to the DNA polymerase type-Y family. In terms of assembly, monomer. Mg(2+) is required as a cofactor.

It localises to the cytoplasm. The enzyme catalyses DNA(n) + a 2'-deoxyribonucleoside 5'-triphosphate = DNA(n+1) + diphosphate. Functionally, poorly processive, error-prone DNA polymerase involved in untargeted mutagenesis. Copies undamaged DNA at stalled replication forks, which arise in vivo from mismatched or misaligned primer ends. These misaligned primers can be extended by PolIV. Exhibits no 3'-5' exonuclease (proofreading) activity. May be involved in translesional synthesis, in conjunction with the beta clamp from PolIII. This chain is DNA polymerase IV, found in Stenotrophomonas maltophilia (strain R551-3).